Reading from the N-terminus, the 586-residue chain is Guanylate-binding protein 5 (586 aa).

Residues 1–306 form an NLRP3-binding region; it reads MALEIHMSDP…TYVNAISSGD (306 aa). The tract at residues 1–309 is GTPase domain (Globular); the sequence is MALEIHMSDP…NAISSGDLPC (309 aa). Residues 35–276 enclose the GB1/RHD3-type G domain; sequence TQPVVVVAIV…FCSYIFSHSM (242 aa). GTP-binding positions include 45 to 52, 67 to 69, 181 to 182, and Leu245; these read GLYRTGKS, VAS, and RD. Positions 529-586 are required for tetramerization, but not for dimerization; that stretch reads MEIAKQNWLAEQQKMQEQQMQEQAAQLSTTFQAQNRSLLSELQHAQRTVNNDDPCVLL. Cys583 carries the post-translational modification Cysteine methyl ester. Residue Cys583 is the site of S-geranylgeranyl cysteine attachment. The propeptide at 584–586 is removed in mature form; the sequence is VLL.

It belongs to the TRAFAC class dynamin-like GTPase superfamily. GB1/RHD3 GTPase family. GB1 subfamily. In terms of assembly, homodimer; homodimerizes upon GTP-binding, forming a close face-to-face dimer. Heterodimer with other family members, including GBP1, GBP2, GBP3 and GBP4. May also form tetramers (dimer of dimers) in the presence of GTP. Interacts with NLRP3, possibly in its tetrameric form, and promotes PYCARD/ASC polymerization. Homodimer; homodimerizes upon GTP-binding. GDP-bound form remains homodimeric. As to quaternary structure, homodimer; homodimerizes upon GTP-binding. GDP-bound is monomeric. Post-translationally, isoprenylation is required for proper subcellular location. Expressed in peripheral blood monocytes (at protein level).

The protein localises to the cytoplasmic vesicle membrane. Its subcellular location is the golgi apparatus membrane. It is found in the cytoplasm. The enzyme catalyses GTP + H2O = GDP + phosphate + H(+). Functionally, interferon (IFN)-inducible GTPase that plays important roles in innate immunity against a diverse range of bacterial, viral and protozoan pathogens. Hydrolyzes GTP, but in contrast to other family members, does not produce GMP. Following infection, recruited to the pathogen-containing vacuoles or vacuole-escaped bacteria and acts as a positive regulator of inflammasome assembly by promoting the release of inflammasome ligands from bacteria. Acts by promoting lysis of pathogen-containing vacuoles, releasing pathogens into the cytosol. Following pathogen release in the cytosol, promotes recruitment of proteins that mediate bacterial cytolysis: this liberates ligands that are detected by inflammasomes, such as lipopolysaccharide (LPS) that activates the non-canonical CASP4/CASP11 inflammasome or double-stranded DNA (dsDNA) that activates the AIM2 inflammasome. As an activator of NLRP3 inflammasome assembly: promotes selective NLRP3 inflammasome assembly in response to microbial and soluble, but not crystalline, agents. Independently of its GTPase activity, acts as an inhibitor of various viruses infectivity, such as HIV-1, Zika and influenza A viruses, by inhibiting FURIN-mediated maturation of viral envelope proteins. In terms of biological role, antigenic tumor-specific truncated splice form. This is Guanylate-binding protein 5 from Homo sapiens (Human).